The following is a 147-amino-acid chain: UPF0306 protein YPK_3704 (147 aa).

It belongs to the UPF0306 family.

This chain is UPF0306 protein YPK_3704, found in Yersinia pseudotuberculosis serotype O:3 (strain YPIII).